The sequence spans 229 residues: MIQAIVTDIEGTTTDIRFVQQVLFPYARERLTPFLREHQQDEEVANALLSLRREVEQPDADIETLITTLHSFMDEDRKSTALKAIQGIIWRSGYLQGDFRGHLYPDVTPQLADWQQQGLKLYVYSSGSVDAQKLLFGYSDAGDLQPLFSGYFDTHVGAKREVSAYQNIAHQLAIAPQALLFLSDIRQELDAAQLAGWQTCQLIRDLPDSESRHLQVSRFDEIDIEGFTA.

Belongs to the HAD-like hydrolase superfamily. MasA/MtnC family. In terms of assembly, monomer. Mg(2+) serves as cofactor.

It catalyses the reaction 5-methylsulfanyl-2,3-dioxopentyl phosphate + H2O = 1,2-dihydroxy-5-(methylsulfanyl)pent-1-en-3-one + phosphate. The protein operates within amino-acid biosynthesis; L-methionine biosynthesis via salvage pathway; L-methionine from S-methyl-5-thio-alpha-D-ribose 1-phosphate: step 3/6. It participates in amino-acid biosynthesis; L-methionine biosynthesis via salvage pathway; L-methionine from S-methyl-5-thio-alpha-D-ribose 1-phosphate: step 4/6. Bifunctional enzyme that catalyzes the enolization of 2,3-diketo-5-methylthiopentyl-1-phosphate (DK-MTP-1-P) into the intermediate 2-hydroxy-3-keto-5-methylthiopentenyl-1-phosphate (HK-MTPenyl-1-P), which is then dephosphorylated to form the acireductone 1,2-dihydroxy-3-keto-5-methylthiopentene (DHK-MTPene). The protein is Enolase-phosphatase E1 of Yersinia enterocolitica serotype O:8 / biotype 1B (strain NCTC 13174 / 8081).